The chain runs to 269 residues: Tryptophan synthase alpha chain (269 aa).

Active-site proton acceptor residues include glutamate 49 and aspartate 60.

It belongs to the TrpA family. As to quaternary structure, tetramer of two alpha and two beta chains.

The catalysed reaction is (1S,2R)-1-C-(indol-3-yl)glycerol 3-phosphate + L-serine = D-glyceraldehyde 3-phosphate + L-tryptophan + H2O. The protein operates within amino-acid biosynthesis; L-tryptophan biosynthesis; L-tryptophan from chorismate: step 5/5. The alpha subunit is responsible for the aldol cleavage of indoleglycerol phosphate to indole and glyceraldehyde 3-phosphate. This chain is Tryptophan synthase alpha chain, found in Klebsiella aerogenes (Enterobacter aerogenes).